The sequence spans 304 residues: Killer cell immunoglobulin-like receptor 2DS2 (304 aa).

The N-terminal stretch at 1–21 is a signal peptide; it reads MSLMVVSMACVGFFLLQGAWP. Residues 22 to 245 are Extracellular-facing; sequence HEGVHRKPSL…SKTGNPRHLH (224 aa). Ig-like C2-type domains follow at residues 42 to 107 and 142 to 205; these read EETV…VTHS and GESV…FRDS. Cystine bridges form between cysteine 49/cysteine 100 and cysteine 149/cysteine 198. N-linked (GlcNAc...) asparagine glycosylation is found at asparagine 84, asparagine 178, and asparagine 211. The disordered stretch occupies residues 220–239; it reads VTGNPSNSWPSPTEPSSKTG. Residues 246–265 traverse the membrane as a helical segment; it reads VLIGTSVVKIPFTILLFFLL. At 266 to 304 the chain is on the cytoplasmic side; the sequence is HRWCSNKKNAAVMDQEPAGNRTVNSEDSDEQDHQEVSYA. The disordered stretch occupies residues 280 to 304; the sequence is QEPAGNRTVNSEDSDEQDHQEVSYA.

This sequence belongs to the immunoglobulin superfamily.

The protein resides in the cell membrane. In terms of biological role, receptor on natural killer (NK) cells for HLA-C alleles. Does not inhibit the activity of NK cells. In Homo sapiens (Human), this protein is Killer cell immunoglobulin-like receptor 2DS2.